We begin with the raw amino-acid sequence, 391 residues long: GTPase Obg (391 aa).

In terms of domain architecture, Obg spans 1–159 (MQFVDEATID…RRLRLELKVL (159 aa)). Residues 160–333 (ADVGLLGMPN…LVYALMNAIE (174 aa)) form the OBG-type G domain. GTP is bound by residues 166 to 173 (GMPNAGKS), 191 to 195 (FTTLI), 213 to 216 (DIPG), 283 to 286 (NKID), and 314 to 316 (SAA). S173 and T193 together coordinate Mg(2+). Positions 367-377 (LKAEARQARQN) are enriched in basic and acidic residues. Positions 367 to 391 (LKAEARQARQNDDDDDHDVEVVYEP) are disordered. Positions 378–391 (DDDDDHDVEVVYEP) are enriched in acidic residues.

The protein belongs to the TRAFAC class OBG-HflX-like GTPase superfamily. OBG GTPase family. In terms of assembly, monomer. Requires Mg(2+) as cofactor.

The protein localises to the cytoplasm. In terms of biological role, an essential GTPase which binds GTP, GDP and possibly (p)ppGpp with moderate affinity, with high nucleotide exchange rates and a fairly low GTP hydrolysis rate. Plays a role in control of the cell cycle, stress response, ribosome biogenesis and in those bacteria that undergo differentiation, in morphogenesis control. This Alcanivorax borkumensis (strain ATCC 700651 / DSM 11573 / NCIMB 13689 / SK2) protein is GTPase Obg.